We begin with the raw amino-acid sequence, 1103 residues long: Bifunctional cytochrome P450/NADPH--P450 reductase (1103 aa).

The segment at 1–491 is cytochrome P450; sequence MSTPKAEPVP…SSSEHADHAA (491 aa). Cys-415 contacts heme. The interval 492–1103 is NADPH--P450 reductase; it reads GHGKAGAAKK…KERYTTDIFA (612 aa). The 142-residue stretch at 508 to 649 folds into the Flavodoxin-like domain; sequence MHVYYGSNTG…DFDTWGETSF (142 aa). FMN is bound by residues 514 to 519, 561 to 564, Cys-596, and Thr-604; these read SNTGTC and SYEG. The 240-residue stretch at 685-924 folds into the FAD-binding FR-type domain; sequence LQLQEGLVVE…RPSHTGFKPP (240 aa).

The protein in the N-terminal section; belongs to the cytochrome P450 family. It depends on heme as a cofactor. FAD is required as a cofactor. Requires FMN as cofactor.

It carries out the reaction 2 oxidized [cytochrome P450] + NADPH = 2 reduced [cytochrome P450] + NADP(+) + H(+). The enzyme catalyses an organic molecule + reduced [NADPH--hemoprotein reductase] + O2 = an alcohol + oxidized [NADPH--hemoprotein reductase] + H2O + H(+). Its function is as follows. Functions as a fatty acid monooxygenase. Also displays a NADPH-dependent reductase activity in the C-terminal domain, which allows electron transfer from NADPH to the heme iron of the cytochrome P450 N-terminal domain. The chain is Bifunctional cytochrome P450/NADPH--P450 reductase from Aspergillus oryzae (strain ATCC 42149 / RIB 40) (Yellow koji mold).